The following is a 668-amino-acid chain: Ecdysone oxidase (668 aa).

FAD contacts are provided by residues Asn137–Val140, Val270, and Trp536–His537. Catalysis depends on His537, which acts as the Proton acceptor.

The protein belongs to the GMC oxidoreductase family. Requires FAD as cofactor.

The enzyme catalyses ecdysone + O2 = 3-dehydroecdysone + H2O2. Involved in the inactivation of ecdysteroid molting hormones by converting ecdysteroids into 3-dehydroecdysteroids. This Bombyx mori (Silk moth) protein is Ecdysone oxidase.